Consider the following 365-residue polypeptide: Flagellar P-ring protein 2 (365 aa).

The first 19 residues, 1–19 (MKKWIVMASLLLAALPAMS), serve as a signal peptide directing secretion.

This sequence belongs to the FlgI family. In terms of assembly, the basal body constitutes a major portion of the flagellar organelle and consists of four rings (L,P,S, and M) mounted on a central rod.

The protein localises to the periplasm. It is found in the bacterial flagellum basal body. Functionally, assembles around the rod to form the L-ring and probably protects the motor/basal body from shearing forces during rotation. The chain is Flagellar P-ring protein 2 from Chromobacterium violaceum (strain ATCC 12472 / DSM 30191 / JCM 1249 / CCUG 213 / NBRC 12614 / NCIMB 9131 / NCTC 9757 / MK).